The primary structure comprises 192 residues: 3-hydroxyanthranilate 3,4-dioxygenase 1 (192 aa).

Residue R50 coordinates O2. Fe cation contacts are provided by H54, E60, and H102. E60 contributes to the substrate binding site. Substrate contacts are provided by R106 and E116. 4 residues coordinate a divalent metal cation: C131, C134, C168, and C171.

This sequence belongs to the 3-HAO family. Fe(2+) is required as a cofactor.

The protein resides in the cytoplasm. The catalysed reaction is 3-hydroxyanthranilate + O2 = (2Z,4Z)-2-amino-3-carboxymuconate 6-semialdehyde. It participates in cofactor biosynthesis; NAD(+) biosynthesis; quinolinate from L-kynurenine: step 3/3. Functionally, catalyzes the oxidative ring opening of 3-hydroxyanthranilate to 2-amino-3-carboxymuconate semialdehyde, which spontaneously cyclizes to quinolinate. In Aspergillus fumigatus (strain CBS 144.89 / FGSC A1163 / CEA10) (Neosartorya fumigata), this protein is 3-hydroxyanthranilate 3,4-dioxygenase 1 (bna1-1).